Consider the following 637-residue polypeptide: MNDTIQATDAAHAHSTHQHSMRALAIAAIGVVFGDIGTSPLYALKEAFSPAHGIPLTESSILGVISLLFWAIILVVGIKYLLFVMRADNNGEGGVLALMALSLRPLDSKTRVAGALMALGIFGACMFYGDAVITPAISVMSAVEGLEIATPHLSHLVLPITIVILIALFWIQRHGTALVGKLFGPIMVVWFVVIAALGVYHIARVPGIIAAINPYYAASFMADHLLQAYVVLGSVVLVLTGAEALYADMGHFGAKPIRLAAYGLVMPSLVLNYFGQGALLIQNPKAIENPFFLLAPEWALLPLVVLSTVATVIASQAVISGAYSLTSQAIQLGYVPRMKVLHTSELAIGQIYVPVVNWLLLFVILCIVIGFKSSDNLAAAYGIAVTATMVITTVLACVVMVKVWNWNRLLVGAIIAIFLAIDLGFFGANLLKVAQGGWLPLGIGALLFFLLMTWYKGRHIVKERTAADGIPLEPFLQGLLAHPPHRVSGTAIYLTGNDKLVPVSLLHNLKHNKVLHERTIFLTFVTRDIPYVRDDTRLSSRDAGGGLYIVKAQYGFNETPDVKAVLEEFGRSHDMTFELMDTSFFLARETVVPTHLPGMSIWRERVFAWMHQNAAKPTDFFSIPANRVVELGTKIEI.

Transmembrane regions (helical) follow at residues 24 to 44 (LAIA…LYAL), 64 to 84 (VISL…LLFV), 113 to 133 (AGAL…DAVI), 151 to 171 (PHLS…LFWI), 182 to 202 (LFGP…VYHI), 225 to 245 (LLQA…AEAL), 261 to 281 (AYGL…ALLI), 290 to 310 (PFFL…STVA), 351 to 371 (IYVP…VIGF), 381 to 401 (YGIA…VVMV), 409 to 429 (LLVG…FGAN), and 433 to 453 (VAQG…LLMT).

It belongs to the HAK/KUP transporter (TC 2.A.72) family.

Its subcellular location is the cell inner membrane. The enzyme catalyses K(+)(in) + H(+)(in) = K(+)(out) + H(+)(out). Functionally, transport of potassium into the cell. Likely operates as a K(+):H(+) symporter. The sequence is that of Probable potassium transport system protein Kup from Burkholderia ambifaria (strain MC40-6).